The primary structure comprises 201 residues: Sorting nexin-10 (201 aa).

Residues 8–125 are required for interaction with ATP6V1D; that stretch reads EEFVSVWVRD…SLHLFLQSHL (118 aa). One can recognise a PX domain in the interval 10 to 127; that stretch reads FVSVWVRDPR…HLFLQSHLNS (118 aa). The a 1,2-diacyl-sn-glycero-3-phospho-(1D-myo-inositol-3-phosphate) site is built by arginine 53, lysine 79, and arginine 94. A disordered region spans residues 155-201; it reads RFPEEEEEGKKDADVEYDSESSSSGLGHSSDDSSSHGCKTSPALQES.

The protein belongs to the sorting nexin family. Interacts with ATP6V1D; may play a role in ciliogenesis. Expressed in femur, calvariae and teeth.

The protein localises to the cytoplasm. It is found in the endosome membrane. Its subcellular location is the cytoskeleton. The protein resides in the microtubule organizing center. It localises to the centrosome. Functionally, probable phosphoinositide-binding protein involved in protein sorting and membrane trafficking in endosomes. Plays a role in cilium biogenesis through regulation of the transport and the localization of proteins to the cilium. Required for the localization to the cilium of V-ATPase subunit ATP6V1D and ATP6V0D1, and RAB8A. Involved in osteoclast differentiation and therefore bone resorption. This Mus musculus (Mouse) protein is Sorting nexin-10 (Snx10).